Reading from the N-terminus, the 187-residue chain is Translation initiation factor IF-3 (187 aa).

It belongs to the IF-3 family. Monomer.

It is found in the cytoplasm. In terms of biological role, IF-3 binds to the 30S ribosomal subunit and shifts the equilibrium between 70S ribosomes and their 50S and 30S subunits in favor of the free subunits, thus enhancing the availability of 30S subunits on which protein synthesis initiation begins. This chain is Translation initiation factor IF-3, found in Leptospira biflexa serovar Patoc (strain Patoc 1 / Ames).